Reading from the N-terminus, the 1177-residue chain is Lon protease homolog, mitochondrial (1177 aa).

Disordered stretches follow at residues 72–197 (RTNS…KSPA) and 353–386 (AKKAKSGKTEDSKHDSKVTSKDGKETTEKYDSST). Residues 103–150 (RGRELWVQEKDKSDKPEKSDKPDKTDKTDKDKPEKQDKDKTDKPEKTK) show a composition bias toward basic and acidic residues. Residues 154 to 182 (TPSSTASTGAGEAAAPPSAPPSGSGSSSS) show a composition bias toward low complexity. The region spanning 203–505 (ILAVPISDRP…RALILLKREH (303 aa)) is the Lon N-terminal domain. Basic and acidic residues predominate over residues 353–383 (AKKAKSGKTEDSKHDSKVTSKDGKETTEKYD). 657–664 (GPPGVGKT) serves as a coordination point for ATP. The segment covering 883–916 (EKDKESAEKKTTKSKSKEVNEEPAAKEEKDKATE) has biased composition (basic and acidic residues). The segment at 883–932 (EKDKESAEKKTTKSKSKEVNEEPAAKEEKDKATESAESSETKVGTKAPPV) is disordered. Residues 964–1150 (DPPPGVVMGL…QDVYDVVFQG (187 aa)) enclose the Lon proteolytic domain. Active-site residues include Ser1056 and Lys1099.

The protein belongs to the peptidase S16 family. In terms of assembly, homohexamer or homoheptamer. Organized in a ring with a central cavity.

It localises to the mitochondrion matrix. It catalyses the reaction Hydrolysis of proteins in presence of ATP.. Its function is as follows. ATP-dependent serine protease that mediates the selective degradation of misfolded, unassembled or oxidatively damaged polypeptides as well as certain short-lived regulatory proteins in the mitochondrial matrix. May also have a chaperone function in the assembly of inner membrane protein complexes. Participates in the regulation of mitochondrial gene expression and in the maintenance of the integrity of the mitochondrial genome. Binds to mitochondrial DNA in a site-specific manner. The protein is Lon protease homolog, mitochondrial of Yarrowia lipolytica (strain CLIB 122 / E 150) (Yeast).